Here is a 407-residue protein sequence, read N- to C-terminus: S-adenosylmethionine synthase (407 aa).

Residue 140–145 (GQGSAD) coordinates ATP.

Belongs to the AdoMet synthase 2 family. Mg(2+) serves as cofactor.

The enzyme catalyses L-methionine + ATP + H2O = S-adenosyl-L-methionine + phosphate + diphosphate. Its pathway is amino-acid biosynthesis; S-adenosyl-L-methionine biosynthesis; S-adenosyl-L-methionine from L-methionine: step 1/1. Catalyzes the formation of S-adenosylmethionine from methionine and ATP. The polypeptide is S-adenosylmethionine synthase (Methanosphaera stadtmanae (strain ATCC 43021 / DSM 3091 / JCM 11832 / MCB-3)).